We begin with the raw amino-acid sequence, 298 residues long: MATH domain and coiled-coil domain-containing protein At3g58280 (298 aa).

The region spanning 9–128 (KKTFGWVIKD…NGEITIIAEV (120 aa)) is the MATH domain. The stretch at 240-288 (NLDWLRQKFDQALEKQIAYDTRIGELEKQVKKRKLAVTELEADLEKEKA) forms a coiled coil.

This chain is MATH domain and coiled-coil domain-containing protein At3g58280, found in Arabidopsis thaliana (Mouse-ear cress).